The following is a 173-amino-acid chain: Photosystem I reaction center subunit XI (173 aa).

A run of 2 helical transmembrane segments spans residues 92 to 112 (LAGLLAAIGLVVLLTGALSLY) and 148 to 168 (LIGGIGGAVVAYFLTSNLGII).

This sequence belongs to the PsaL family.

The protein localises to the cellular thylakoid membrane. The sequence is that of Photosystem I reaction center subunit XI from Nostoc punctiforme (strain ATCC 29133 / PCC 73102).